The sequence spans 154 residues: Large ribosomal subunit protein uL13 (154 aa).

The protein belongs to the universal ribosomal protein uL13 family. In terms of assembly, part of the 50S ribosomal subunit.

Functionally, this protein is one of the early assembly proteins of the 50S ribosomal subunit, although it is not seen to bind rRNA by itself. It is important during the early stages of 50S assembly. The protein is Large ribosomal subunit protein uL13 of Brucella melitensis biotype 2 (strain ATCC 23457).